The chain runs to 399 residues: Elongation factor Tu (399 aa).

In terms of domain architecture, tr-type G spans 10-209; it reads KPHVNIGTIG…AVDDYIPTPA (200 aa). The segment at 19–26 is G1; it reads GHVDHGKT. Residue 19 to 26 coordinates GTP; the sequence is GHVDHGKT. Threonine 26 lines the Mg(2+) pocket. Residues 60-64 form a G2 region; it reads GITIA. Residues 81-84 form a G3 region; that stretch reads DCPG. GTP is bound by residues 81–85 and 136–139; these read DCPGH and NKAD. Positions 136–139 are G4; it reads NKAD. Residues 174–176 are G5; sequence SAL.

This sequence belongs to the TRAFAC class translation factor GTPase superfamily. Classic translation factor GTPase family. EF-Tu/EF-1A subfamily. In terms of assembly, monomer.

The protein localises to the cytoplasm. The catalysed reaction is GTP + H2O = GDP + phosphate + H(+). In terms of biological role, GTP hydrolase that promotes the GTP-dependent binding of aminoacyl-tRNA to the A-site of ribosomes during protein biosynthesis. In Campylobacter lari (strain RM2100 / D67 / ATCC BAA-1060), this protein is Elongation factor Tu.